The chain runs to 471 residues: Argininosuccinate lyase (471 aa).

Belongs to the lyase 1 family. Argininosuccinate lyase subfamily.

Its subcellular location is the cytoplasm. It catalyses the reaction 2-(N(omega)-L-arginino)succinate = fumarate + L-arginine. The protein operates within amino-acid biosynthesis; L-arginine biosynthesis; L-arginine from L-ornithine and carbamoyl phosphate: step 3/3. In Renibacterium salmoninarum (strain ATCC 33209 / DSM 20767 / JCM 11484 / NBRC 15589 / NCIMB 2235), this protein is Argininosuccinate lyase.